The chain runs to 100 residues: Ubiquitin-related modifier 1 homolog (100 aa).

Residue G100 is modified to 1-thioglycine. G100 participates in a covalent cross-link: Glycyl lysine isopeptide (Gly-Lys) (interchain with K-? in acceptor proteins).

This sequence belongs to the URM1 family. Post-translationally, C-terminal thiocarboxylation occurs in 2 steps, it is first acyl-adenylated (-COAMP) via the hesA/moeB/thiF part of the MOCS3 homolog, then thiocarboxylated (-COSH) via the rhodanese domain of the MOCS3 homolog.

It localises to the cytoplasm. Its pathway is tRNA modification; 5-methoxycarbonylmethyl-2-thiouridine-tRNA biosynthesis. Acts as a sulfur carrier required for 2-thiolation of mcm(5)S(2)U at tRNA wobble positions of cytosolic tRNA(Lys), tRNA(Glu) and tRNA(Gln). Serves as sulfur donor in tRNA 2-thiolation reaction by being thiocarboxylated (-COSH) at its C-terminus by MOCS3. The sulfur is then transferred to tRNA to form 2-thiolation of mcm(5)S(2)U. Also acts as a ubiquitin-like protein (UBL) that is covalently conjugated via an isopeptide bond to lysine residues of target proteins. The thiocarboxylated form serves as substrate for conjugation and oxidative stress specifically induces the formation of UBL-protein conjugates. The sequence is that of Ubiquitin-related modifier 1 homolog from Oryza sativa subsp. japonica (Rice).